A 76-amino-acid polypeptide reads, in one-letter code: Large ribosomal subunit protein eL20 (76 aa).

This sequence belongs to the eukaryotic ribosomal protein eL20 family. Part of the 50S ribosomal subunit. Binds 23S rRNA.

This Methanococcus maripaludis (strain C6 / ATCC BAA-1332) protein is Large ribosomal subunit protein eL20.